Here is a 791-residue protein sequence, read N- to C-terminus: Disintegrin and metalloproteinase domain-containing protein 1a (791 aa).

The signal sequence occupies residues 1–65; sequence MSVAAAGRGF…LLIFLPSTFC (65 aa). The N-linked (GlcNAc...) asparagine glycan is linked to N72. Residues 201–220 are disordered; the sequence is CSVTPKDSPGDTSHPPRSRK. A Peptidase M12B domain is found at 235–429; sequence KYVEMFVVVN…HRGACLLDEP (195 aa). N256 is a glycosylation site (N-linked (GlcNAc...) asparagine). Intrachain disulfides connect C345/C424, C385/C408, and C387/C393. H370 is a binding site for Zn(2+). The active site involves E371. Residues H374 and H380 each contribute to the Zn(2+) site. N-linked (GlcNAc...) asparagine glycosylation is found at N407 and N484. The Disintegrin domain maps to 438-522; sequence AANCGNGVVE…ECPANSYMQD (85 aa). Residues C494 and C514 are joined by a disulfide bond. N630 carries an N-linked (GlcNAc...) asparagine glycan. The EGF-like domain maps to 663–697; sequence LQYNCEPQEMCHGNGVCNNFKHCHCDAGFAPPDCS. 3 cysteine pairs are disulfide-bonded: C667/C679, C673/C685, and C687/C696. The helical transmembrane segment at 741 to 761 threads the bilayer; sequence VMVLVVPIFLVVLLCCLMLIA. Over 762-791 the chain is Cytoplasmic; that stretch reads YLWSEVQEVVSPPSSSESSSSSSWSDSDSQ. A disordered region spans residues 772-791; sequence SPPSSSESSSSSSWSDSDSQ.

Heterodimer with ADAM2/fertilin subunit beta. Testis.

Its subcellular location is the membrane. In terms of biological role, may be involved in sperm-egg fusion. This is Disintegrin and metalloproteinase domain-containing protein 1a (Adam1a) from Mus musculus (Mouse).